Consider the following 353-residue polypeptide: Protein MGF 360-11L (353 aa).

This sequence belongs to the asfivirus MGF 360 family. As to quaternary structure, interacts with host TBK1 ad IRF7.

Plays a role in virus cell tropism, and may be required for efficient virus replication in macrophages. In addition, inhibits the phosphorylation of host TBK1 and IRF7 and thereby negatively regulates the host cGAS signaling pathway and antagonizes IFN-mediated antiviral activity. The sequence is that of Protein MGF 360-11L from African swine fever virus (isolate Tick/South Africa/Pretoriuskop Pr4/1996) (ASFV).